The following is a 479-amino-acid chain: uncharacterized protein (479 aa).

ATP is bound by residues 150 to 158 (TSGSTGKPK), D360, R375, and K462.

Belongs to the ATP-dependent AMP-binding enzyme family.

May be involved in fatty acid metabolism. This is an uncharacterized protein from Bacillus subtilis (strain 168).